Here is a 320-residue protein sequence, read N- to C-terminus: Malate dehydrogenase (320 aa).

NAD(+)-binding positions include 10–15 (GAGQIG) and D34. Substrate contacts are provided by R83 and R89. Residues N96 and 119–121 (ITN) contribute to the NAD(+) site. Residues N121 and R152 each contribute to the substrate site. H176 (proton acceptor) is an active-site residue.

It belongs to the LDH/MDH superfamily. MDH type 3 family.

It carries out the reaction (S)-malate + NAD(+) = oxaloacetate + NADH + H(+). Its function is as follows. Catalyzes the reversible oxidation of malate to oxaloacetate. This chain is Malate dehydrogenase, found in Methylorubrum populi (strain ATCC BAA-705 / NCIMB 13946 / BJ001) (Methylobacterium populi).